The following is a 101-amino-acid chain: Urease subunit beta (101 aa).

It belongs to the urease beta subunit family. In terms of assembly, heterotrimer of UreA (gamma), UreB (beta) and UreC (alpha) subunits. Three heterotrimers associate to form the active enzyme.

It localises to the cytoplasm. It carries out the reaction urea + 2 H2O + H(+) = hydrogencarbonate + 2 NH4(+). It participates in nitrogen metabolism; urea degradation; CO(2) and NH(3) from urea (urease route): step 1/1. The polypeptide is Urease subunit beta (Burkholderia ambifaria (strain ATCC BAA-244 / DSM 16087 / CCUG 44356 / LMG 19182 / AMMD) (Burkholderia cepacia (strain AMMD))).